A 321-amino-acid polypeptide reads, in one-letter code: Protein ABIL3 (321 aa).

Disordered stretches follow at residues 179–273 (TIRE…RSAS) and 279–298 (EKEA…SKRL). Low complexity-rich tracts occupy residues 204 to 215 (SATFSFSSIATA) and 240 to 255 (IRPS…SKSR). The span at 279-288 (EKEAQKEPEH) shows a compositional bias: basic and acidic residues.

The protein belongs to the ABI family. As to quaternary structure, binds SCAR.

It localises to the cytoplasm. The protein localises to the cytoskeleton. Involved in regulation of actin and microtubule organization. Part of a WAVE complex that activates the Arp2/3 complex. In Arabidopsis thaliana (Mouse-ear cress), this protein is Protein ABIL3 (ABIL3).